We begin with the raw amino-acid sequence, 319 residues long: Plastid lipid-associated protein 2, chloroplastic (319 aa).

The transit peptide at 1 to 59 directs the protein to the chloroplast; that stretch reads MATVQFFNQFPCKTRVQSSANSKPLSKPPSSLVPMSALTRRPSFPPGEFAVSRSDFRVR. The tract at residues 17-39 is disordered; the sequence is QSSANSKPLSKPPSSLVPMSALT. Positions 18 to 36 are enriched in low complexity; the sequence is SSANSKPLSKPPSSLVPMS.

Belongs to the PAP/fibrillin family. As to expression, expressed almost exclusively in petals. Very weak expression in all other organs.

The protein resides in the plastid. Its subcellular location is the chloroplast. Functionally, may stabilize the accumulated carotenoid structures. This is Plastid lipid-associated protein 2, chloroplastic (PAP2) from Brassica campestris (Field mustard).